Consider the following 309-residue polypeptide: Prephenate dehydratase (309 aa).

The region spanning 3–191 is the Prephenate dehydratase domain; the sequence is GIAYLGPEGT…ARTRFVLVGC (189 aa). Residues 205 to 282 form the ACT domain; that stretch reads SVVLRLDNVP…ADVRYLGSWP (78 aa).

As to quaternary structure, homodimer.

It catalyses the reaction prephenate + H(+) = 3-phenylpyruvate + CO2 + H2O. Its pathway is amino-acid biosynthesis; L-phenylalanine biosynthesis; phenylpyruvate from prephenate: step 1/1. This Mycolicibacterium gilvum (strain PYR-GCK) (Mycobacterium gilvum (strain PYR-GCK)) protein is Prephenate dehydratase (pheA).